Reading from the N-terminus, the 498-residue chain is NADH-quinone oxidoreductase subunit N (498 aa).

14 helical membrane passes run 10 to 30 (LMPL…MLLI), 44 to 64 (VVGL…GKFV), 68 to 88 (VMGM…ILVA), 109 to 129 (ELYL…ASSH), 130 to 150 (YASF…LLAY), 164 to 184 (YLVL…YIYA), 207 to 227 (VLLG…LAPF), 239 to 259 (PAPM…GLFV), 273 to 293 (LVTV…LLAV), 301 to 321 (ILGY…ISMT), 328 to 348 (VTVY…AVAL), 377 to 397 (ATLT…GFIG), 412 to 434 (FLAA…VMVV), and 458 to 478 (LMVL…DPMI).

This sequence belongs to the complex I subunit 2 family. As to quaternary structure, NDH-1 is composed of 14 different subunits. Subunits NuoA, H, J, K, L, M, N constitute the membrane sector of the complex.

The protein resides in the cell inner membrane. It carries out the reaction a quinone + NADH + 5 H(+)(in) = a quinol + NAD(+) + 4 H(+)(out). In terms of biological role, NDH-1 shuttles electrons from NADH, via FMN and iron-sulfur (Fe-S) centers, to quinones in the respiratory chain. The immediate electron acceptor for the enzyme in this species is believed to be ubiquinone. Couples the redox reaction to proton translocation (for every two electrons transferred, four hydrogen ions are translocated across the cytoplasmic membrane), and thus conserves the redox energy in a proton gradient. The protein is NADH-quinone oxidoreductase subunit N of Acinetobacter baumannii (strain AB0057).